The chain runs to 552 residues: Putative E3 ubiquitin-protein ligase ARI6 (552 aa).

Residues Arg129–Glu343 are TRIAD supradomain. Zn(2+) is bound by residues Cys133, Cys136, Cys150, His152, Cys155, Cys158, Cys178, Cys183, Cys222, Cys227, Cys245, Cys247, Cys252, Cys255, His260, Cys265, Cys292, and Cys295. The RING-type 1 zinc finger occupies Cys133–Cys183. Residues Glu202–Cys265 form an IBR-type zinc finger. The RING-type 2; atypical zinc-finger motif lies at Cys292–Cys322. Cys305 is an active-site residue. The Zn(2+) site is built by Cys310, Cys314, Cys319, Cys322, His329, and Cys339. The disordered stretch occupies residues His518–Thr552. Polar residues predominate over residues Ala519–Lys534.

It belongs to the RBR family. Ariadne subfamily. Zn(2+) serves as cofactor.

It catalyses the reaction [E2 ubiquitin-conjugating enzyme]-S-ubiquitinyl-L-cysteine + [acceptor protein]-L-lysine = [E2 ubiquitin-conjugating enzyme]-L-cysteine + [acceptor protein]-N(6)-ubiquitinyl-L-lysine.. It participates in protein modification; protein ubiquitination. Functionally, might act as an E3 ubiquitin-protein ligase, or as part of E3 complex, which accepts ubiquitin from specific E2 ubiquitin-conjugating enzymes and then transfers it to substrates. The polypeptide is Putative E3 ubiquitin-protein ligase ARI6 (ARI6) (Arabidopsis thaliana (Mouse-ear cress)).